Here is a 211-residue protein sequence, read N- to C-terminus: Large ribosomal subunit protein bL25 (211 aa).

Disordered stretches follow at residues 1–23 (MAGEIPDLVAEPRAGTGKGAARQ) and 191–211 (LRSADNEADEEETEEATAEEV). Over residues 196-211 (NEADEEETEEATAEEV) the composition is skewed to acidic residues.

The protein belongs to the bacterial ribosomal protein bL25 family. CTC subfamily. As to quaternary structure, part of the 50S ribosomal subunit; part of the 5S rRNA/L5/L18/L25 subcomplex. Contacts the 5S rRNA. Binds to the 5S rRNA independently of L5 and L18.

Functionally, this is one of the proteins that binds to the 5S RNA in the ribosome where it forms part of the central protuberance. The sequence is that of Large ribosomal subunit protein bL25 from Dinoroseobacter shibae (strain DSM 16493 / NCIMB 14021 / DFL 12).